A 283-amino-acid polypeptide reads, in one-letter code: Protein canopy homolog 3 (283 aa).

Positions 1 to 35 are cleaved as a signal peptide; that stretch reads MEPLPEPTSRPRLRPRPRCLLLLPLLLLLLLLLPA. A Saposin B-type domain is found at 55–276; the sequence is SKCEVCKYVA…EGIQKASPLT (222 aa). Asn-161 carries N-linked (GlcNAc...) asparagine glycosylation. Residues 161–187 adopt a coiled-coil conformation; the sequence is NETSAEVADLKKQCDVLVEEFEEVIED. The segment at 223 to 283 is disordered; sequence KGDTAALGGK…PLTHSPPDEL (61 aa).

This sequence belongs to the canopy family. As to quaternary structure, interacts with HSP90B1; this interaction is disrupted in the presence of ATP. Interacts with TLR1, TLR2, TLR4 and TLR9.

The protein localises to the endoplasmic reticulum. Toll-like receptor (TLR)-specific co-chaperone for HSP90B1. Required for proper TLR folding, except that of TLR3, and hence controls TLR exit from the endoplasmic reticulum. Consequently, required for both innate and adaptive immune responses. The chain is Protein canopy homolog 3 (CNPY3) from Sus scrofa (Pig).